Here is a 1017-residue protein sequence, read N- to C-terminus: uncharacterized protein (1017 aa).

The tat-type signal signal peptide spans 1 to 34; it reads MGNLTMSRRTFVKTAAITGAAAAAFGASTHTALA. The 4Fe-4S Mo/W bis-MGD-type domain occupies 45–103; it reads DTVAVKTCCRGCGKMECGVKVIVQNGRAIRVEGDEGAFQSMGNCCTKSQSSIQAAYHPD. Positions 53, 56, 61, and 89 each coordinate [4Fe-4S] cluster. Catalysis depends on K91, which acts as the Electron donor/acceptor.

It belongs to the prokaryotic molybdopterin-containing oxidoreductase family. The cofactor is [4Fe-4S] cluster. It depends on Mo-bis(molybdopterin guanine dinucleotide) as a cofactor. In terms of processing, predicted to be exported by the Tat system. The position of the signal peptide cleavage has not been experimentally proven.

This is an uncharacterized protein from Eggerthella lenta (strain ATCC 25559 / DSM 2243 / CCUG 17323 / JCM 9979 / KCTC 3265 / NCTC 11813 / VPI 0255 / 1899 B) (Eubacterium lentum).